Reading from the N-terminus, the 469-residue chain is Glutamate--tRNA ligase (469 aa).

The 'HIGH' region signature appears at 9–19; it reads PSPTGFLHVGG. Positions 236–240 match the 'KMSKS' region motif; it reads KLSKR. Lysine 239 provides a ligand contact to ATP.

Belongs to the class-I aminoacyl-tRNA synthetase family. Glutamate--tRNA ligase type 1 subfamily. In terms of assembly, monomer.

Its subcellular location is the cytoplasm. The enzyme catalyses tRNA(Glu) + L-glutamate + ATP = L-glutamyl-tRNA(Glu) + AMP + diphosphate. Its function is as follows. Catalyzes the attachment of glutamate to tRNA(Glu) in a two-step reaction: glutamate is first activated by ATP to form Glu-AMP and then transferred to the acceptor end of tRNA(Glu). The protein is Glutamate--tRNA ligase of Pseudoalteromonas atlantica (strain T6c / ATCC BAA-1087).